Consider the following 224-residue polypeptide: 7-cyano-7-deazaguanine synthase (224 aa).

Residue 10-20 (LSGGLDSATVV) coordinates ATP. Residues Cys-189, Cys-199, Cys-202, and Cys-205 each contribute to the Zn(2+) site.

Belongs to the QueC family. The cofactor is Zn(2+).

It carries out the reaction 7-carboxy-7-deazaguanine + NH4(+) + ATP = 7-cyano-7-deazaguanine + ADP + phosphate + H2O + H(+). The protein operates within purine metabolism; 7-cyano-7-deazaguanine biosynthesis. Catalyzes the ATP-dependent conversion of 7-carboxy-7-deazaguanine (CDG) to 7-cyano-7-deazaguanine (preQ(0)). This is 7-cyano-7-deazaguanine synthase from Pseudomonas fluorescens (strain SBW25).